The chain runs to 913 residues: Polyribonucleotide nucleotidyltransferase (913 aa).

Residues Tyr-407–Pro-427 form a disordered region. Mg(2+) contacts are provided by Asp-521 and Asp-527. Residues Pro-587–Ile-646 enclose the KH domain. The 73-residue stretch at Gly-658–Pro-730 folds into the S1 motif domain. A disordered region spans residues Leu-727–Asp-913. 3 stretches are compositionally biased toward basic and acidic residues: residues Ser-742–Asp-789, Asp-797–Gly-865, and Arg-872–Glu-898.

It belongs to the polyribonucleotide nucleotidyltransferase family. It depends on Mg(2+) as a cofactor.

The protein localises to the cytoplasm. It catalyses the reaction RNA(n+1) + phosphate = RNA(n) + a ribonucleoside 5'-diphosphate. In terms of biological role, involved in mRNA degradation. Catalyzes the phosphorolysis of single-stranded polyribonucleotides processively in the 3'- to 5'-direction. The protein is Polyribonucleotide nucleotidyltransferase of Bifidobacterium longum (strain DJO10A).